The primary structure comprises 231 residues: MMTQHTLSQLHQLRLGGMARALEEQWTLPASHSLSFDERLGLLLDRELAWRDDKRLERLRKQAKLKYASACLEDLDRRRGRTLDERLIATLASGDWIRQRHNLLLTGPTGVGKTWFACALGHQACRQGYSALYLRTPRLLEQLRIAHGDGSFGRTLQQLAKVDVLILDDWGLAALEENARHDLLEVIDDRAGSRSTILTSQLPSSTGTAGSTTPRWPTPCSIAWYTTPTES.

107 to 114 serves as a coordination point for ATP; it reads GPTGVGKT.

Belongs to the IS21/IS1162 putative ATP-binding protein family.

This Pseudomonas fluorescens protein is Insertion sequence IS1162 putative ATP-binding protein.